Here is a 375-residue protein sequence, read N- to C-terminus: Succinyl-diaminopimelate desuccinylase (375 aa).

Residue His66 coordinates Zn(2+). Asp68 is a catalytic residue. Asp99 contacts Zn(2+). The active-site Proton acceptor is the Glu133. Positions 134, 162, and 348 each coordinate Zn(2+).

Belongs to the peptidase M20A family. DapE subfamily. In terms of assembly, homodimer. Requires Zn(2+) as cofactor. Co(2+) serves as cofactor.

It carries out the reaction N-succinyl-(2S,6S)-2,6-diaminopimelate + H2O = (2S,6S)-2,6-diaminopimelate + succinate. The protein operates within amino-acid biosynthesis; L-lysine biosynthesis via DAP pathway; LL-2,6-diaminopimelate from (S)-tetrahydrodipicolinate (succinylase route): step 3/3. Catalyzes the hydrolysis of N-succinyl-L,L-diaminopimelic acid (SDAP), forming succinate and LL-2,6-diaminopimelate (DAP), an intermediate involved in the bacterial biosynthesis of lysine and meso-diaminopimelic acid, an essential component of bacterial cell walls. The protein is Succinyl-diaminopimelate desuccinylase of Erwinia tasmaniensis (strain DSM 17950 / CFBP 7177 / CIP 109463 / NCPPB 4357 / Et1/99).